The following is a 368-amino-acid chain: H-2 class I histocompatibility antigen, K-W28 alpha chain (368 aa).

The N-terminal stretch at 1-21 (MAPCMLLLLLAAALAPTQTRA) is a signal peptide. The segment at 22–111 (GPHSLRYFHT…LLRYYNQSAG (90 aa)) is alpha-1. Residues 22 to 305 (GPHSLRYFHT…EPPPSAVSNT (284 aa)) are Extracellular-facing. Asn-107 carries N-linked (GlcNAc...) asparagine glycosylation. The tract at residues 112-203 (GSHTIQRMYG…KNGNATLLRT (92 aa)) is alpha-2. Cys-122 and Cys-185 are joined by a disulfide. An N-linked (GlcNAc...) asparagine glycan is attached at Asn-197. The segment at 204–295 (DSPKAHVTHH…GLPKPLTLRW (92 aa)) is alpha-3. The Ig-like C1-type domain occupies 206 to 292 (PKAHVTHHSR…YHQGLPKPLT (87 aa)). A disulfide bridge connects residues Cys-224 and Cys-280. The connecting peptide stretch occupies residues 296–305 (EPPPSAVSNT). Residues 306-329 (VIIAVLVVLGAAIVTGAVVAFVMM) traverse the membrane as a helical segment. Residues 330-368 (RRRNTGGKGGDYALAPGSQTSDLSLPDCKVMVHDPHSLA) lie on the Cytoplasmic side of the membrane. 2 positions are modified to phosphoserine: Ser-350 and Ser-353.

Belongs to the MHC class I family. As to quaternary structure, heterodimer of an alpha chain and a beta chain (beta-2-microglobulin).

It is found in the membrane. In terms of biological role, involved in the presentation of foreign antigens to the immune system. This Mus musculus (Mouse) protein is H-2 class I histocompatibility antigen, K-W28 alpha chain (H2-K1).